Reading from the N-terminus, the 219-residue chain is Octanoyltransferase (219 aa).

A BPL/LPL catalytic domain is found at 34–209; the sequence is SESPDELWIV…TFSQLLGYQH (176 aa). Residues 73-80, 140-142, and 153-155 each bind substrate; these read RGGQVTYH, SLG, and GLA. Residue Cys171 is the Acyl-thioester intermediate of the active site.

The protein belongs to the LipB family.

Its subcellular location is the cytoplasm. The enzyme catalyses octanoyl-[ACP] + L-lysyl-[protein] = N(6)-octanoyl-L-lysyl-[protein] + holo-[ACP] + H(+). It participates in protein modification; protein lipoylation via endogenous pathway; protein N(6)-(lipoyl)lysine from octanoyl-[acyl-carrier-protein]: step 1/2. Its function is as follows. Catalyzes the transfer of endogenously produced octanoic acid from octanoyl-acyl-carrier-protein onto the lipoyl domains of lipoate-dependent enzymes. Lipoyl-ACP can also act as a substrate although octanoyl-ACP is likely to be the physiological substrate. The chain is Octanoyltransferase from Shewanella putrefaciens (strain CN-32 / ATCC BAA-453).